The chain runs to 672 residues: MLPFHLVRTQAGRVIPVLLAALFLAGCPSHAPQSPPPEVQGKADASSDYYLQQMQQSSDNNKADWQLLAIRSLLQEGKAPQASQQFNTLPEKLSAAQKQEQQLLSAELSAAQNNMDAAKAALSQLDVGALSEQQKSRYYQTQIKTAQGRPSIELLRAYIAQEPLLKGDEHQMNLDQTWLALTQMSPQESGALLINADENVLQGWVDLLNNYQNNRESPDQLQSAIQDWKTRYPHHPAAKNLPMQLNQVINYQPSSVSSIALLLPLNGQAQVFANAIQQGFNAAKNGQIATAAVSAPVAPPTDTAQAGQVTPSSDGQNAQSPAPYSDQAVASTTPAPAAQATSAGLSSSLPVKVYDTSSQPLANILTQAQQDGASLVIGPLLKNEVDQLASNPSPLNILALNQPERVENSPNICYFALSPEDEARDAAKFIHQQGKQQPLVLAPRGALGDRIVNAFAQAWNQQSGTSALQQRFGNSAELKQAINSGAGLSLNGQPVNVSQQQAQAGTTIGGLTIPSQVQPTASSSVSGNIDAVYIIATPDELALIKPMIDMRTSSRARPALYASSRSFQAGLGPDFRLEMEGLQFSDIPLLAGANPALMQQVSSQFKNDYSLVRLYAMGMDAWTLASHFGEMRQIPGHQISGATGMLSAGPDCTINRQLTWQQYRQGQLVPVL.

Positions Met1–Gly26 are cleaved as a signal peptide. The N-palmitoyl cysteine moiety is linked to residue Cys27. Cys27 is lipidated: S-diacylglycerol cysteine. Residues Ala298–Pro336 form a disordered region. Over residues Gln305–Ala322 the composition is skewed to polar residues. Residues Gln327–Pro336 show a composition bias toward low complexity.

Belongs to the LpoA family. In terms of assembly, interacts with PBP1a.

The protein resides in the cell outer membrane. Regulator of peptidoglycan synthesis that is essential for the function of penicillin-binding protein 1A (PBP1a). This Pectobacterium parmentieri (strain WPP163) (Pectobacterium wasabiae (strain WPP163)) protein is Penicillin-binding protein activator LpoA.